The chain runs to 469 residues: Glutamate--tRNA ligase (469 aa).

The 'HIGH' region motif lies at 11-21 (PSPTGFIHLGN). Positions 243-247 (KMSKR) match the 'KMSKS' region motif. Lysine 246 lines the ATP pocket.

Belongs to the class-I aminoacyl-tRNA synthetase family. Glutamate--tRNA ligase type 1 subfamily. In terms of assembly, monomer.

The protein localises to the cytoplasm. It carries out the reaction tRNA(Glu) + L-glutamate + ATP = L-glutamyl-tRNA(Glu) + AMP + diphosphate. In terms of biological role, catalyzes the attachment of glutamate to tRNA(Glu) in a two-step reaction: glutamate is first activated by ATP to form Glu-AMP and then transferred to the acceptor end of tRNA(Glu). In Burkholderia ambifaria (strain MC40-6), this protein is Glutamate--tRNA ligase.